The primary structure comprises 32 residues: MSDIN-like toxin proprotein 2 (32 aa).

The propeptide occupies 1-10 (MSDINATRVP). The cyclopeptide (Ala-Pro) cross-link spans 11–17 (AWLAECP). The propeptide occupies 18–32 (CVGDDISHLLTRGEK).

The protein belongs to the MSDIN fungal toxin family. In terms of processing, processed by the macrocyclase-peptidase enzyme POPB to yield a toxic cyclic heptapeptide. POPB first removes 10 residues from the N-terminus. Conformational trapping of the remaining peptide forces the enzyme to release this intermediate rather than proceed to macrocyclization. The enzyme rebinds the remaining peptide in a different conformation and catalyzes macrocyclization of the N-terminal 7 residues.

Functionally, probable toxin that belongs to the MSDIN-like toxin family responsible for a large number of food poisoning cases and deaths. This Amanita rimosa protein is MSDIN-like toxin proprotein 2.